Reading from the N-terminus, the 167-residue chain is Sperm acrosome membrane-associated protein 3 (167 aa).

Topologically, residues 1–63 (MVSALREAPL…EARSRALRRR (63 aa)) are cytoplasmic. A helical; Signal-anchor for type II membrane protein membrane pass occupies residues 64-84 (WCPAGIILLALISLLSCLLPA). The Extracellular segment spans residues 85–167 (SEAKVYGRCE…VPNVCQMYCS (83 aa)). The C-type lysozyme domain occupies 88-167 (KVYGRCELAR…VPNVCQMYCS (80 aa)). Cys151 and Cys166 form a disulfide bridge.

The protein belongs to the glycosyl hydrolase 22 family. In terms of assembly, interacts with ASTL. In terms of processing, the processed form derives from the membrane form by proteolytic processing.

It is found in the cytoplasmic vesicle. It localises to the secretory vesicle. The protein localises to the acrosome membrane. Functionally, sperm surface membrane protein that may be involved in sperm-egg plasma membrane adhesion and fusion during fertilization. It could be a potential receptor for the egg oligosaccharide residue N-acetylglucosamine, which is present in the extracellular matrix over the egg plasma membrane. The processed form has no detectable bacteriolytic activity in vitro. The polypeptide is Sperm acrosome membrane-associated protein 3 (SPACA3) (Pongo pygmaeus (Bornean orangutan)).